Here is a 283-residue protein sequence, read N- to C-terminus: Phosphatidylserine decarboxylase proenzyme (283 aa).

Residues Asp-96, His-152, and Ser-250 each act as charge relay system; for autoendoproteolytic cleavage activity in the active site. The Schiff-base intermediate with substrate; via pyruvic acid; for decarboxylase activity role is filled by Ser-250. Ser-250 is modified (pyruvic acid (Ser); by autocatalysis).

The protein belongs to the phosphatidylserine decarboxylase family. PSD-B subfamily. Prokaryotic type I sub-subfamily. Heterodimer of a large membrane-associated beta subunit and a small pyruvoyl-containing alpha subunit. The cofactor is pyruvate. Is synthesized initially as an inactive proenzyme. Formation of the active enzyme involves a self-maturation process in which the active site pyruvoyl group is generated from an internal serine residue via an autocatalytic post-translational modification. Two non-identical subunits are generated from the proenzyme in this reaction, and the pyruvate is formed at the N-terminus of the alpha chain, which is derived from the carboxyl end of the proenzyme. The autoendoproteolytic cleavage occurs by a canonical serine protease mechanism, in which the side chain hydroxyl group of the serine supplies its oxygen atom to form the C-terminus of the beta chain, while the remainder of the serine residue undergoes an oxidative deamination to produce ammonia and the pyruvoyl prosthetic group on the alpha chain. During this reaction, the Ser that is part of the protease active site of the proenzyme becomes the pyruvoyl prosthetic group, which constitutes an essential element of the active site of the mature decarboxylase.

Its subcellular location is the cell membrane. The enzyme catalyses a 1,2-diacyl-sn-glycero-3-phospho-L-serine + H(+) = a 1,2-diacyl-sn-glycero-3-phosphoethanolamine + CO2. Its pathway is phospholipid metabolism; phosphatidylethanolamine biosynthesis; phosphatidylethanolamine from CDP-diacylglycerol: step 2/2. Its function is as follows. Catalyzes the formation of phosphatidylethanolamine (PtdEtn) from phosphatidylserine (PtdSer). The chain is Phosphatidylserine decarboxylase proenzyme from Acinetobacter baumannii (strain ATCC 17978 / DSM 105126 / CIP 53.77 / LMG 1025 / NCDC KC755 / 5377).